We begin with the raw amino-acid sequence, 365 residues long: Histidinol-phosphate aminotransferase 2 (365 aa).

At lysine 222 the chain carries N6-(pyridoxal phosphate)lysine.

It belongs to the class-II pyridoxal-phosphate-dependent aminotransferase family. Histidinol-phosphate aminotransferase subfamily. As to quaternary structure, homodimer. Pyridoxal 5'-phosphate serves as cofactor.

It carries out the reaction L-histidinol phosphate + 2-oxoglutarate = 3-(imidazol-4-yl)-2-oxopropyl phosphate + L-glutamate. Its pathway is amino-acid biosynthesis; L-histidine biosynthesis; L-histidine from 5-phospho-alpha-D-ribose 1-diphosphate: step 7/9. The protein is Histidinol-phosphate aminotransferase 2 (hisC2) of Bordetella bronchiseptica (strain ATCC BAA-588 / NCTC 13252 / RB50) (Alcaligenes bronchisepticus).